Reading from the N-terminus, the 239-residue chain is MGASIDDYCLIHKKILHSEDLLKYILETSAYPREHEQLKGLREVTEKHEWSSALVPADEGLFLSMLIKLMNAKRTIEIGVYTGYSLLTTALALPEDGKITAIDVNKSFFEIGLPFIQKAGVEHKINFIESEALPVLDQMLQETKEEDLYDYAFVDADKSNYANYHERLVKLVRIGGAILYDNTLWYGSVAYPEYPGLHPEEEVARLSFRNLNTFLAADPRVEISQVSIGDGVTICRRLY.

S-adenosyl-L-methionine is bound by residues Val55, Glu77, 79–80 (GV), Ser85, Asp103, and Ala132. Asp155 contacts a divalent metal cation. Asp157 serves as a coordination point for S-adenosyl-L-methionine. A divalent metal cation-binding residues include Asp181 and Asn182.

The protein belongs to the class I-like SAM-binding methyltransferase superfamily. Cation-dependent O-methyltransferase family. Mg(2+) is required as a cofactor.

The catalysed reaction is norbelladine + S-adenosyl-L-methionine = 4'-O-methylnorbelladine + S-adenosyl-L-homocysteine + H(+). The protein operates within alkaloid biosynthesis. In terms of biological role, 4'-O-methyltransferase converting norbelladine to 4'-O-methylnorbelladine. 4'-O-methylnorbelladine is a precursor to all Amaryllidaceae alkaloids such as galanthamine, lycorine and haemanthamine, and including haemanthamine- and crinamine-type alkaloids, promising anticancer agents. This Narcissus aff. pseudonarcissus MK-2014 (Daffodil) protein is Norbelladine 4'-O-methyltransferase 4.